Reading from the N-terminus, the 157-residue chain is uncharacterized protein (157 aa).

In terms of domain architecture, HTH marR-type spans 6 to 157; it reads HDELFQAIQQ…AFFNLWIKYM (152 aa). Residues 66 to 89 constitute a DNA-binding region (H-T-H motif); sequence NSFLASRLHISKAAVSKAVHALLK.

Its subcellular location is the cytoplasm. This is an uncharacterized protein from Bacillus subtilis (strain 168).